The chain runs to 116 residues: L-amino-acid oxidase BjussuLAAO-II (116 aa).

An FAD-binding site is contributed by 42–45 (GPMR). Positions 45 and 78 each coordinate substrate.

It belongs to the flavin monoamine oxidase family. FIG1 subfamily. Homodimer; non-covalently linked. Requires FAD as cofactor. Post-translationally, glycosylated. In terms of tissue distribution, expressed by the venom gland.

The protein localises to the secreted. The catalysed reaction is an L-alpha-amino acid + O2 + H2O = a 2-oxocarboxylate + H2O2 + NH4(+). The enzyme catalyses L-leucine + O2 + H2O = 4-methyl-2-oxopentanoate + H2O2 + NH4(+). It carries out the reaction L-phenylalanine + O2 + H2O = 3-phenylpyruvate + H2O2 + NH4(+). It catalyses the reaction L-methionine + O2 + H2O = 4-methylsulfanyl-2-oxobutanoate + H2O2 + NH4(+). The catalysed reaction is L-isoleucine + O2 + H2O = (S)-3-methyl-2-oxopentanoate + H2O2 + NH4(+). The enzyme catalyses L-histidine + O2 + H2O = 3-(imidazol-5-yl)pyruvate + H2O2 + NH4(+). It carries out the reaction L-tyrosine + O2 + H2O = 3-(4-hydroxyphenyl)pyruvate + H2O2 + NH4(+). It catalyses the reaction L-tryptophan + O2 + H2O = indole-3-pyruvate + H2O2 + NH4(+). Its enzymatic activities is reduced by the presence of Zn(2+), Al(3+), Cu(2+), Na(+) or Ni(2+) salts. Functionally, catalyzes an oxidative deamination of predominantly hydrophobic and aromatic L-amino acids, thus producing hydrogen peroxide that may contribute to the diverse toxic effects of this enzyme. Shows very high enzymatic activity on L-Met and L-Leu, high activity on L-Ile, L-Phe and L-Tyr and moderate activity on L-His. Exhibits diverse biological activities, such as hemorrhage, hemolysis, edema, apoptosis of vascular endothelial cells or tumor cell lines, and antibacterial, as well as regulation of platelet aggregation. Effects of snake L-amino oxidases on platelets are controversial, since they either induce aggregation or inhibit agonist-induced aggregation. These different effects are probably due to different experimental conditions. In vitro, has a strong antiprotozoal effect against Leishmania amazonensis (IC(50)=4.56 ug/mL) and Trypanosoma cruzi (IC(50)=4.85 ug/mL). It also causes cell death and DNA damage in hepatocarcinoma cells (HepG2) in vitro by inducing oxidative stress. It exerts cytotoxicity towards colorectal adenocarcinomahuman cells (Caco-2) by acting on multiple intracellular targets. It diminishes cell viability by decreasing mitochondrial activity, the activity of acid phosphatases, and lysosomal function. In addition, it increases intracellular levels of reactive oxygen species and DNA damage, it elevates the expression of the pro-inflammatory cytokine genes TNF and IL6, and lowers the expression of the apoptotic-related genes. Also induces cytotoxicity (IC(50)=1.80 ug/mL) and apoptosis in MCF-7 cells (a human breast adeno-carcinoma cell line) by activating the intrinsic and extrinsic apoptosis pathways, but are not cytotoxic towards MCF-10A cells (a non-tumorigenic human breast epithelial cell line). The polypeptide is L-amino-acid oxidase BjussuLAAO-II (Bothrops jararacussu (Jararacussu)).